Consider the following 616-residue polypeptide: FAD-linked oxidoreductase cheF (616 aa).

Residues 160-344 (NQGLVSPWYV…LSMTVRVEPA (185 aa)) form the FAD-binding PCMH-type domain.

The protein belongs to the oxygen-dependent FAD-linked oxidoreductase family. FAD is required as a cofactor.

It functions in the pathway secondary metabolite biosynthesis. In terms of biological role, FAD-linked oxidoreductase; part of the gene cluster that mediates the biosynthesis of chaetoglobosin A which has a unique inhibitory activity against actin polymerization in mammalian cells. Chaetoglobosin A and its intermediates are involved in the morphological differentiation of C.globosum. The first step of the pathway is the synthesis of prochaetoglobosin I via condensation of one acetyl-CoA, 8 malonyl-CoA, and a L-tryptophan molecule by the PKS-NRPS hybrid synthetase cheA, followed by reduction of backbone double bond to install desired geometry by the enoyl reductase cheB. Further multiple oxidation steps performed by the cytochrome P450 monooxygenases cheE and cheG, as well as by the FAD-linked oxidoreductase cheF, lead to the formation of chaetoglobosin A. Depending on the order of action of these reductases, distinct intermediates can be identified. Within the pathway, the cytochrome P450 monooxygenase cheE catalyzes a stereospecific epoxidation on prochaetoglobosin I, cytoglobosin D, and chaetoglobosin J intermediates. The FAD-linked oxidoreductase cheF performs dehydrogenation of the C-20 hydroxyl groups in the 20-dihyrochaetoglobosin A and cytoglobosin D intermediates. Finally, the cytochrome P450 monooxygenase cheG can catalyze the stereospecific dihydroxylation of prochaetoglobosin I and prochaetoglobosin IV at C-19 and C-20, respectively. The Diels-Alderase cheD may play a role in the post-PKS-NRPS biosynthetic steps catalyzing Diels-Alder cyclization. This chain is FAD-linked oxidoreductase cheF, found in Chaetomium globosum (strain ATCC 6205 / CBS 148.51 / DSM 1962 / NBRC 6347 / NRRL 1970) (Soil fungus).